We begin with the raw amino-acid sequence, 287 residues long: Large ribosomal subunit protein uL2 (287 aa).

The interval 221 to 287 is disordered; sequence RGSVMNPCDH…SKRSRGGRDS (67 aa). Residues 258 to 287 show a composition bias toward basic residues; the sequence is KTRKKNKPSNKLVVRRRRRVSKRSRGGRDS.

This sequence belongs to the universal ribosomal protein uL2 family. As to quaternary structure, part of the 50S ribosomal subunit. Forms a bridge to the 30S subunit in the 70S ribosome.

Its function is as follows. One of the primary rRNA binding proteins. Required for association of the 30S and 50S subunits to form the 70S ribosome, for tRNA binding and peptide bond formation. It has been suggested to have peptidyltransferase activity; this is somewhat controversial. Makes several contacts with the 16S rRNA in the 70S ribosome. The protein is Large ribosomal subunit protein uL2 of Prochlorococcus marinus (strain AS9601).